The primary structure comprises 199 residues: uncharacterized protein (199 aa).

The helical transmembrane segment at 17-37 (AGAVTLGIGFFALASALWFLI) threads the bilayer.

It localises to the membrane. This is an uncharacterized protein from Homo sapiens (Human).